A 212-amino-acid chain; its full sequence is Adenylate kinase (212 aa).

ATP is bound at residue 10–15 (GAGKGT). Residues 30–59 (AIGDIFRTIIKTSTSEAELINNYVKQGELI) form an NMP region. AMP contacts are provided by residues arginine 36, 57-59 (ELI), 85-88 (GYPR), and glutamine 92. The LID stretch occupies residues 122 to 160 (GRYSCKNCGKIYNRYFVQPKTDNVCDVCGSSTFDYRKDD). Position 123 (arginine 123) interacts with ATP. Zn(2+) contacts are provided by cysteine 126 and cysteine 129. 132–133 (IY) provides a ligand contact to ATP. Zn(2+) is bound by residues cysteine 146 and cysteine 149. AMP is bound by residues arginine 157 and arginine 168. Lysine 196 contacts ATP.

Belongs to the adenylate kinase family. Monomer.

The protein localises to the cytoplasm. The catalysed reaction is AMP + ATP = 2 ADP. The protein operates within purine metabolism; AMP biosynthesis via salvage pathway; AMP from ADP: step 1/1. Functionally, catalyzes the reversible transfer of the terminal phosphate group between ATP and AMP. Plays an important role in cellular energy homeostasis and in adenine nucleotide metabolism. This chain is Adenylate kinase, found in Rickettsia conorii (strain ATCC VR-613 / Malish 7).